The following is a 488-amino-acid chain: 7,8-epoxymelianol synthase CYP88A51 (488 aa).

The helical transmembrane segment at 4 to 24 (NFLWPMLAMFLGSLVVMFGFL) threads the bilayer. Residue cysteine 436 participates in heme binding.

The protein belongs to the cytochrome P450 family. It depends on heme as a cofactor. In terms of tissue distribution, accumulates in mature fruits and in juice vesicles.

It localises to the membrane. It catalyses the reaction melianol + reduced [NADPH--hemoprotein reductase] + O2 = 7,8-epoxymelianol + oxidized [NADPH--hemoprotein reductase] + H2O + H(+). It functions in the pathway secondary metabolite biosynthesis; terpenoid biosynthesis. Its function is as follows. Monooxygenase involved in the biosynthesis of limonoids triterpene natural products such as limonin, a compound with insecticidal activity responsible for the bitter taste in citrus. Catalyzes the epoxidation of melianol to produce 7,8-epoxymelianol. The polypeptide is 7,8-epoxymelianol synthase CYP88A51 (Citrus sinensis (Sweet orange)).